The sequence spans 1241 residues: DNA-directed RNA polymerase subunit beta (1241 aa).

Positions 1201–1224 (AEEEQDTDVDYITEDDFESPDPEI) are disordered.

It belongs to the RNA polymerase beta chain family. In terms of assembly, the RNAP catalytic core consists of 2 alpha, 1 beta, 1 beta' and 1 omega subunit. When a sigma factor is associated with the core the holoenzyme is formed, which can initiate transcription.

The catalysed reaction is RNA(n) + a ribonucleoside 5'-triphosphate = RNA(n+1) + diphosphate. Its function is as follows. DNA-dependent RNA polymerase catalyzes the transcription of DNA into RNA using the four ribonucleoside triphosphates as substrates. This Alkaliphilus oremlandii (strain OhILAs) (Clostridium oremlandii (strain OhILAs)) protein is DNA-directed RNA polymerase subunit beta.